Consider the following 421-residue polypeptide: Serine hydroxymethyltransferase (421 aa).

Residues L121 and 125-127 (GHL) each bind (6S)-5,6,7,8-tetrahydrofolate. The residue at position 230 (K230) is an N6-(pyridoxal phosphate)lysine.

It belongs to the SHMT family. Homodimer. Pyridoxal 5'-phosphate serves as cofactor.

It is found in the cytoplasm. It catalyses the reaction (6R)-5,10-methylene-5,6,7,8-tetrahydrofolate + glycine + H2O = (6S)-5,6,7,8-tetrahydrofolate + L-serine. The protein operates within one-carbon metabolism; tetrahydrofolate interconversion. It functions in the pathway amino-acid biosynthesis; glycine biosynthesis; glycine from L-serine: step 1/1. Functionally, catalyzes the reversible interconversion of serine and glycine with tetrahydrofolate (THF) serving as the one-carbon carrier. This reaction serves as the major source of one-carbon groups required for the biosynthesis of purines, thymidylate, methionine, and other important biomolecules. Also exhibits THF-independent aldolase activity toward beta-hydroxyamino acids, producing glycine and aldehydes, via a retro-aldol mechanism. The protein is Serine hydroxymethyltransferase of Carboxydothermus hydrogenoformans (strain ATCC BAA-161 / DSM 6008 / Z-2901).